The sequence spans 173 residues: ATP synthase subunit b 1 (173 aa).

The chain crosses the membrane as a helical span at residues 15–37 (TFWVTVAVLIFLAFFGRKIVGAI).

It belongs to the ATPase B chain family. As to quaternary structure, F-type ATPases have 2 components, F(1) - the catalytic core - and F(0) - the membrane proton channel. F(1) has five subunits: alpha(3), beta(3), gamma(1), delta(1), epsilon(1). F(0) has three main subunits: a(1), b(2) and c(10-14). The alpha and beta chains form an alternating ring which encloses part of the gamma chain. F(1) is attached to F(0) by a central stalk formed by the gamma and epsilon chains, while a peripheral stalk is formed by the delta and b chains.

Its subcellular location is the cell inner membrane. Its function is as follows. F(1)F(0) ATP synthase produces ATP from ADP in the presence of a proton or sodium gradient. F-type ATPases consist of two structural domains, F(1) containing the extramembraneous catalytic core and F(0) containing the membrane proton channel, linked together by a central stalk and a peripheral stalk. During catalysis, ATP synthesis in the catalytic domain of F(1) is coupled via a rotary mechanism of the central stalk subunits to proton translocation. Component of the F(0) channel, it forms part of the peripheral stalk, linking F(1) to F(0). This is ATP synthase subunit b 1 from Acidiphilium cryptum (strain JF-5).